The chain runs to 139 residues: Immunogenic miracidial antigen 8I' (139 aa).

Positions 61 to 139 (IDVGDEDYHD…PKKYGSGYKH (79 aa)) are disordered. The span at 64–85 (GDEDYHDGDDDVDYTDDVDDVD) shows a compositional bias: acidic residues. Polar residues predominate over residues 90–103 (SPSQLLQGGYQRNQ).

This sequence belongs to the immunogenic miracidial antigen family.

The sequence is that of Immunogenic miracidial antigen 8I' (8I') from Schistosoma japonicum (Blood fluke).